The primary structure comprises 285 residues: Diaminopimelate epimerase (285 aa).

Asn-11 and Asn-62 together coordinate substrate. Cys-71 functions as the Proton donor in the catalytic mechanism. Substrate-binding positions include 72 to 73 (GN), Asn-167, Asn-200, and 218 to 219 (ER). The active-site Proton acceptor is Cys-227. Position 228 to 229 (228 to 229 (GT)) interacts with substrate.

It belongs to the diaminopimelate epimerase family. Homodimer.

It localises to the cytoplasm. The catalysed reaction is (2S,6S)-2,6-diaminopimelate = meso-2,6-diaminopimelate. The protein operates within amino-acid biosynthesis; L-lysine biosynthesis via DAP pathway; DL-2,6-diaminopimelate from LL-2,6-diaminopimelate: step 1/1. Catalyzes the stereoinversion of LL-2,6-diaminopimelate (L,L-DAP) to meso-diaminopimelate (meso-DAP), a precursor of L-lysine and an essential component of the bacterial peptidoglycan. In Agathobacter rectalis (strain ATCC 33656 / DSM 3377 / JCM 17463 / KCTC 5835 / VPI 0990) (Eubacterium rectale), this protein is Diaminopimelate epimerase.